A 156-amino-acid chain; its full sequence is 6,7-dimethyl-8-ribityllumazine synthase (156 aa).

Residues phenylalanine 23, alanine 57–glutamate 59, and threonine 81–isoleucine 83 each bind 5-amino-6-(D-ribitylamino)uracil. Serine 86–threonine 87 serves as a coordination point for (2S)-2-hydroxy-3-oxobutyl phosphate. Histidine 89 functions as the Proton donor in the catalytic mechanism. Phenylalanine 114 serves as a coordination point for 5-amino-6-(D-ribitylamino)uracil. Arginine 128 contacts (2S)-2-hydroxy-3-oxobutyl phosphate.

The protein belongs to the DMRL synthase family. Forms an icosahedral capsid composed of 60 subunits, arranged as a dodecamer of pentamers.

The catalysed reaction is (2S)-2-hydroxy-3-oxobutyl phosphate + 5-amino-6-(D-ribitylamino)uracil = 6,7-dimethyl-8-(1-D-ribityl)lumazine + phosphate + 2 H2O + H(+). Its pathway is cofactor biosynthesis; riboflavin biosynthesis; riboflavin from 2-hydroxy-3-oxobutyl phosphate and 5-amino-6-(D-ribitylamino)uracil: step 1/2. Functionally, catalyzes the formation of 6,7-dimethyl-8-ribityllumazine by condensation of 5-amino-6-(D-ribitylamino)uracil with 3,4-dihydroxy-2-butanone 4-phosphate. This is the penultimate step in the biosynthesis of riboflavin. This is 6,7-dimethyl-8-ribityllumazine synthase from Halalkalibacterium halodurans (strain ATCC BAA-125 / DSM 18197 / FERM 7344 / JCM 9153 / C-125) (Bacillus halodurans).